A 715-amino-acid polypeptide reads, in one-letter code: Polyribonucleotide nucleotidyltransferase (715 aa).

Mg(2+) contacts are provided by D498 and D504. Residues 565 to 625 (PKVCMMQIKP…ETVKKTVAFI (61 aa)) form the KH domain. In terms of domain architecture, S1 motif spans 635 to 709 (GTCYQASILR…RIDFLLLPKK (75 aa)).

The protein belongs to the polyribonucleotide nucleotidyltransferase family. The cofactor is Mg(2+).

It localises to the cytoplasm. It catalyses the reaction RNA(n+1) + phosphate = RNA(n) + a ribonucleoside 5'-diphosphate. Its function is as follows. Involved in mRNA degradation. Catalyzes the phosphorolysis of single-stranded polyribonucleotides processively in the 3'- to 5'-direction. The sequence is that of Polyribonucleotide nucleotidyltransferase from Aster yellows witches'-broom phytoplasma (strain AYWB).